We begin with the raw amino-acid sequence, 359 residues long: Protein Wnt-5b (359 aa).

An N-terminal signal peptide occupies residues 1 to 17 (MPSLLLLFTAALLSSWA). Cys-83 and Cys-94 are oxidised to a cystine. Asn-93 and Asn-99 each carry an N-linked (GlcNAc...) asparagine glycan. Intrachain disulfides connect Cys-133/Cys-141, Cys-143/Cys-161, Cys-217/Cys-231, Cys-219/Cys-226, Cys-288/Cys-319, Cys-304/Cys-314, Cys-318/Cys-358, Cys-334/Cys-349, Cys-336/Cys-346, and Cys-341/Cys-342. A lipid anchor (O-palmitoleoyl serine; by PORCN) is attached at Ser-223. Residues Asn-291 and Asn-305 are each glycosylated (N-linked (GlcNAc...) asparagine).

This sequence belongs to the Wnt family. In terms of assembly, interacts with PORCN. In terms of processing, palmitoleoylation is required for efficient binding to frizzled receptors. Depalmitoleoylation leads to Wnt signaling pathway inhibition.

Its subcellular location is the secreted. It localises to the extracellular space. The protein localises to the extracellular matrix. Its function is as follows. Ligand for members of the frizzled family of seven transmembrane receptors. Probable developmental protein. May be a signaling molecule which affects the development of discrete regions of tissues. Is likely to signal over only few cell diameters. The chain is Protein Wnt-5b (WNT5B) from Homo sapiens (Human).